The primary structure comprises 398 residues: Mu-type opioid receptor (398 aa).

Residues 1–66 (MDSSAGPGNI…CPQTGSPSMV (66 aa)) are Extracellular-facing. 4 N-linked (GlcNAc...) asparagine glycosylation sites follow: asparagine 9, asparagine 31, asparagine 38, and asparagine 46. The helical transmembrane segment at 67–91 (TAITIMALYSIVCVVGLFGNFLVMY) threads the bilayer. Topologically, residues 92–104 (VIVRYTKMKTATN) are cytoplasmic. A helical membrane pass occupies residues 105–129 (IYIFNLALADALATSTLPFQSVNYL). Residues 130–140 (MGTWPFGNILC) are Extracellular-facing. Cysteine 140 and cysteine 217 are joined by a disulfide. The helical transmembrane segment at 141-163 (KIVISIDYYNMFTSIFTLCTMSV) threads the bilayer. At 164 to 183 (DRYIAVCHPVKALDFRTPRN) the chain is on the cytoplasmic side. Tyrosine 166 carries the phosphotyrosine modification. The chain crosses the membrane as a helical span at residues 184 to 205 (AKIVNVCNWILSSAIGLPVMFM). At 206–228 (ATTKYRQGSIDCTLTFSHPTWYW) the chain is on the extracellular side. The helical transmembrane segment at 229–253 (ENLLKICVFIFAFIMPVLIITVCYG) threads the bilayer. At 254 to 277 (LMILRLKSVRMLSGSKEKDRNLRR) the chain is on the cytoplasmic side. A helical membrane pass occupies residues 278-304 (ITRMVLVVVAVFIVCWTPIHIYVIIKA). The Extracellular portion of the chain corresponds to 305–312 (LITIPETT). The helical transmembrane segment at 313 to 336 (FQTVSWHFCIALGYTNSCLNPVLY) threads the bilayer. Positions 332–336 (NPVLY) match the NPxxY; plays a role in stabilizing the activated conformation of the receptor motif. The Cytoplasmic segment spans residues 337 to 398 (AFLDENFKRC…NLEAETAPLP (62 aa)). Cysteine 351 carries S-palmitoyl cysteine lipidation. Residues 362 to 383 (NSARIRQNTREHPSTANTVDRT) are disordered. The residue at position 363 (serine 363) is a Phosphoserine. Threonine 370 carries the post-translational modification Phosphothreonine. Serine 375 carries the phosphoserine modification. A Phosphothreonine modification is found at threonine 394.

This sequence belongs to the G-protein coupled receptor 1 family. As to quaternary structure, forms homooligomers and heterooligomers with other GPCRs, such as OPRD1, OPRK1, OPRL1, NPFFR2, ADRA2A, SSTR2, CNR1 and CCR5 (probably in dimeric forms). Interacts with heterotrimeric G proteins; interaction with a heterotrimeric complex containing GNAI1, GNB1 and GNG2 stabilizes the active conformation of the receptor and increases its affinity for endomorphin-2, the synthetic opioid peptide DAMGO and for morphinan agonists. Interacts with PPL; the interaction disrupts agonist-mediated G-protein activation. Interacts (via C-terminus) with DNAJB4 (via C-terminus). Interacts with calmodulin; the interaction inhibits the constitutive activity of OPRM1; it abolishes basal and attenuates agonist-stimulated G-protein coupling. Interacts with FLNA, PLD2, RANBP9 and WLS and GPM6A. Interacts with RTP4. Interacts with SYP and GNAS. Interacts with RGS9, RGS17, RGS20, RGS4, PPP1R9B and HINT1. Isoform 9 interacts with GRPR. Phosphorylated. Differentially phosphorylated in basal and agonist-induced conditions. Agonist-mediated phosphorylation modulates receptor internalization. Phosphorylated by GRK2 in a agonist-dependent manner. Phosphorylation at Tyr-166 requires receptor activation, is dependent on non-receptor protein tyrosine kinase Src and results in a decrease in agonist efficacy by reducing G-protein coupling efficiency. Phosphorylated on tyrosine residues; the phosphorylation is involved in agonist-induced G-protein-independent receptor down-regulation. Phosphorylation at Ser-375 is involved in G-protein-dependent but not beta-arrestin-dependent activation of the ERK pathway. In terms of processing, ubiquitinated. A basal ubiquitination seems not to be related to degradation. Ubiquitination is increased upon formation of OPRM1:OPRD1 oligomers leading to proteasomal degradation; the ubiquitination is diminished by RTP4.

The protein resides in the cell membrane. Its subcellular location is the cell projection. It is found in the axon. The protein localises to the perikaryon. It localises to the dendrite. The protein resides in the endosome. Receptor for endogenous opioids such as beta-endorphin and endomorphin. Receptor for natural and synthetic opioids including morphine, heroin, DAMGO, fentanyl, etorphine, buprenorphin and methadone. Also activated by enkephalin peptides, such as Met-enkephalin or Met-enkephalin-Arg-Phe, with higher affinity for Met-enkephalin-Arg-Phe. Agonist binding to the receptor induces coupling to an inactive GDP-bound heterotrimeric G-protein complex and subsequent exchange of GDP for GTP in the G-protein alpha subunit leading to dissociation of the G-protein complex with the free GTP-bound G-protein alpha and the G-protein beta-gamma dimer activating downstream cellular effectors. The agonist- and cell type-specific activity is predominantly coupled to pertussis toxin-sensitive G(i) and G(o) G alpha proteins, GNAI1, GNAI2, GNAI3 and GNAO1 isoforms Alpha-1 and Alpha-2, and to a lesser extent to pertussis toxin-insensitive G alpha proteins GNAZ and GNA15. They mediate an array of downstream cellular responses, including inhibition of adenylate cyclase activity and both N-type and L-type calcium channels, activation of inward rectifying potassium channels, mitogen-activated protein kinase (MAPK), phospholipase C (PLC), phosphoinositide/protein kinase (PKC), phosphoinositide 3-kinase (PI3K) and regulation of NF-kappa-B. Also couples to adenylate cyclase stimulatory G alpha proteins. The selective temporal coupling to G-proteins and subsequent signaling can be regulated by RGSZ proteins, such as RGS9, RGS17 and RGS4. Phosphorylation by members of the GPRK subfamily of Ser/Thr protein kinases and association with beta-arrestins is involved in short-term receptor desensitization. Beta-arrestins associate with the GPRK-phosphorylated receptor and uncouple it from the G-protein thus terminating signal transduction. The phosphorylated receptor is internalized through endocytosis via clathrin-coated pits which involves beta-arrestins. The activation of the ERK pathway occurs either in a G-protein-dependent or a beta-arrestin-dependent manner and is regulated by agonist-specific receptor phosphorylation. Acts as a class A G-protein coupled receptor (GPCR) which dissociates from beta-arrestin at or near the plasma membrane and undergoes rapid recycling. Receptor down-regulation pathways are varying with the agonist and occur dependent or independent of G-protein coupling. Endogenous ligands induce rapid desensitization, endocytosis and recycling. Heterooligomerization with other GPCRs can modulate agonist binding, signaling and trafficking properties. Its function is as follows. Isoform 9 is involved in morphine-induced scratching and seems to cross-activate GRPR in response to morphine. The polypeptide is Mu-type opioid receptor (Oprm1) (Mus musculus (Mouse)).